The primary structure comprises 521 residues: Riboflavin transporter MCH5 (521 aa).

Disordered regions lie at residues 1–33 (MSSD…SIHY) and 65–96 (NKGT…NEEI). At 1 to 103 (MSSDSLTPKD…EEIESFPEGG (103 aa)) the chain is on the cytoplasmic side. The chain crosses the membrane as a helical span at residues 104–124 (FKAWVVTFGCFLGLIACFGLL). An N-linked (GlcNAc...) asparagine glycan is attached at N125. Topologically, residues 125–143 (NSTGVIESHLQDNQLSSES) are extracellular. A helical transmembrane segment spans residues 144–164 (VSTIGWLFSLFLFVCSASCII). Residues 165–172 (SGTYFDRN) are Cytoplasmic-facing. Residues 173 to 193 (GFRTIMIVGTVFHVAGLFATA) form a helical membrane-spanning segment. Residue N194 is glycosylated (N-linked (GlcNAc...) asparagine). The Extracellular portion of the chain corresponds to 194 to 200 (NSTKYWH). The helical transmembrane segment at 201-221 (FILSFAIVCGFGNGIVLSPLV) threads the bilayer. The Cytoplasmic segment spans residues 222–233 (SVPAHYFFKRRG). Residues 234 to 254 (TALAMATIGGSVGGVVFPIML) traverse the membrane as a helical segment. At 255–269 (RSFFSMKSDTDPTYG) the chain is on the extracellular side. A helical membrane pass occupies residues 270 to 290 (FVWGIRTLGFLDLALLTLSII). Over 291–325 (LVKERLPHVIENSKDGESRWRYILRVYILQCFDAK) the chain is Cytoplasmic. Residues 326-346 (AFLDMKYLFCVLGTVFSELSI) form a helical membrane-spanning segment. The Extracellular segment spans residues 347–367 (NSALTYYGSYATSHGISANDA). A helical membrane pass occupies residues 368–388 (YTLIMIINVCGIPGRWVPGYL). Over 389-396 (SDKFGRFN) the chain is Cytoplasmic. A helical transmembrane segment spans residues 397–417 (VAIATLLTLFIVMFVGWLPFG). Residues 418-422 (TNLTN) are Extracellular-facing. The N-linked (GlcNAc...) asparagine glycan is linked to N419. Residues 423 to 443 (MYVISALYGFCSGSVFSLLPV) traverse the membrane as a helical segment. Topologically, residues 444–461 (CCGQISKTEEFGKRYSTM) are cytoplasmic. The helical transmembrane segment at 462–482 (YFVVGFGTLVGIPITGAIISI) threads the bilayer. The Extracellular segment spans residues 483–487 (KTTAD). The helical transmembrane segment at 488-508 (YQHYIIFCGLATFVSAVCYII) threads the bilayer. The Cytoplasmic portion of the chain corresponds to 509-521 (SRAYCVGFKWVRF).

The protein belongs to the major facilitator superfamily. Monocarboxylate porter (TC 2.A.1.13) family.

It localises to the cell membrane. In terms of biological role, riboflavin transporter involved in riboflavin (vitamin B2) uptake. Does not act in the transport of monocarboxylic acids across the plasma membrane. This is Riboflavin transporter MCH5 (MCH5) from Saccharomyces cerevisiae (strain ATCC 204508 / S288c) (Baker's yeast).